The primary structure comprises 634 residues: DNA gyrase subunit B (634 aa).

Positions 416 to 530 (REIYIVEGDS…NGHVYIAMPP (115 aa)) constitute a Toprim domain. Residues Glu422, Asp495, and Asp497 each contribute to the Mg(2+) site.

The protein belongs to the type II topoisomerase GyrB family. Heterotetramer, composed of two GyrA and two GyrB chains. In the heterotetramer, GyrA contains the active site tyrosine that forms a transient covalent intermediate with DNA, while GyrB binds cofactors and catalyzes ATP hydrolysis. Mg(2+) is required as a cofactor. The cofactor is Mn(2+). Requires Ca(2+) as cofactor.

The protein localises to the cytoplasm. The enzyme catalyses ATP-dependent breakage, passage and rejoining of double-stranded DNA.. A type II topoisomerase that negatively supercoils closed circular double-stranded (ds) DNA in an ATP-dependent manner to modulate DNA topology and maintain chromosomes in an underwound state. Negative supercoiling favors strand separation, and DNA replication, transcription, recombination and repair, all of which involve strand separation. Also able to catalyze the interconversion of other topological isomers of dsDNA rings, including catenanes and knotted rings. Type II topoisomerases break and join 2 DNA strands simultaneously in an ATP-dependent manner. The polypeptide is DNA gyrase subunit B (Borrelia hermsii).